Here is a 217-residue protein sequence, read N- to C-terminus: Pyridoxine/pyridoxamine 5'-phosphate oxidase (217 aa).

Residues Arg66–Lys71, Phe81–Thr82, Arg87, Lys88, and Gln110 contribute to the FMN site. Lys71 serves as a coordination point for substrate. 3 residues coordinate substrate: Tyr128, Arg132, and Ser136. FMN is bound by residues Gln145–Ser146 and Trp190. Arg196–His198 is a substrate binding site. Arg200 provides a ligand contact to FMN.

This sequence belongs to the pyridoxamine 5'-phosphate oxidase family. Homodimer. Requires FMN as cofactor.

The catalysed reaction is pyridoxamine 5'-phosphate + O2 + H2O = pyridoxal 5'-phosphate + H2O2 + NH4(+). It carries out the reaction pyridoxine 5'-phosphate + O2 = pyridoxal 5'-phosphate + H2O2. It functions in the pathway cofactor metabolism; pyridoxal 5'-phosphate salvage; pyridoxal 5'-phosphate from pyridoxamine 5'-phosphate: step 1/1. The protein operates within cofactor metabolism; pyridoxal 5'-phosphate salvage; pyridoxal 5'-phosphate from pyridoxine 5'-phosphate: step 1/1. Catalyzes the oxidation of either pyridoxine 5'-phosphate (PNP) or pyridoxamine 5'-phosphate (PMP) into pyridoxal 5'-phosphate (PLP). The protein is Pyridoxine/pyridoxamine 5'-phosphate oxidase of Psychromonas ingrahamii (strain DSM 17664 / CCUG 51855 / 37).